Consider the following 130-residue polypeptide: Transcription antitermination protein NusB (130 aa).

It belongs to the NusB family.

Its function is as follows. Involved in transcription antitermination. Required for transcription of ribosomal RNA (rRNA) genes. Binds specifically to the boxA antiterminator sequence of the ribosomal RNA (rrn) operons. The polypeptide is Transcription antitermination protein NusB (Sulfurovum sp. (strain NBC37-1)).